A 263-amino-acid polypeptide reads, in one-letter code: Endonuclease 8 (263 aa).

Residue Pro-2 is the Schiff-base intermediate with DNA of the active site. Glu-3 functions as the Proton donor in the catalytic mechanism. Lys-53 functions as the Proton donor; for beta-elimination activity in the catalytic mechanism. DNA is bound by residues Gln-70, Arg-125, and Asn-169. An FPG-type zinc finger spans residues 229–263 (KVFHRDGEACERCGGIIEKTTLSSRPFYWCPHCQK). Arg-253 acts as the Proton donor; for delta-elimination activity in catalysis.

The protein belongs to the FPG family. Zn(2+) serves as cofactor.

The enzyme catalyses 2'-deoxyribonucleotide-(2'-deoxyribose 5'-phosphate)-2'-deoxyribonucleotide-DNA = a 3'-end 2'-deoxyribonucleotide-(2,3-dehydro-2,3-deoxyribose 5'-phosphate)-DNA + a 5'-end 5'-phospho-2'-deoxyribonucleoside-DNA + H(+). Its function is as follows. Involved in base excision repair of DNA damaged by oxidation or by mutagenic agents. Acts as a DNA glycosylase that recognizes and removes damaged bases. Has a preference for oxidized pyrimidines, such as thymine glycol, 5,6-dihydrouracil and 5,6-dihydrothymine. Has AP (apurinic/apyrimidinic) lyase activity and introduces nicks in the DNA strand. Cleaves the DNA backbone by beta-delta elimination to generate a single-strand break at the site of the removed base with both 3'- and 5'-phosphates. The polypeptide is Endonuclease 8 (Salmonella heidelberg (strain SL476)).